The chain runs to 328 residues: Putative lipase LIH1 (328 aa).

The active-site Nucleophile is the S181. Active-site charge relay system residues include D253 and H315.

This sequence belongs to the AB hydrolase superfamily. Lipase family.

The catalysed reaction is a triacylglycerol + H2O = a diacylglycerol + a fatty acid + H(+). In terms of biological role, lipases catalyze the hydrolysis of the ester bond of tri-, di- and monoglycerides of long-chain fatty acids into fatty acids and glycerol. The protein is Putative lipase LIH1 of Saccharomyces cerevisiae (strain ATCC 204508 / S288c) (Baker's yeast).